Reading from the N-terminus, the 143-residue chain is MAKKIVGFIKLQVPAGKANPSPPIGPALGQRGLNIMEFCKAFNAKTQGMELGLPIPVVITAFADKSFTFIMKTPPATVLIKKASGVQKGSAKPHTDKVGTLTRAQAEEIAKTKQPDLTAADLDAAVRTIAGSARSMGITVEGG.

It belongs to the universal ribosomal protein uL11 family. As to quaternary structure, part of the ribosomal stalk of the 50S ribosomal subunit. Interacts with L10 and the large rRNA to form the base of the stalk. L10 forms an elongated spine to which L12 dimers bind in a sequential fashion forming a multimeric L10(L12)X complex. One or more lysine residues are methylated.

In terms of biological role, forms part of the ribosomal stalk which helps the ribosome interact with GTP-bound translation factors. In Bordetella pertussis (strain Tohama I / ATCC BAA-589 / NCTC 13251), this protein is Large ribosomal subunit protein uL11.